We begin with the raw amino-acid sequence, 343 residues long: Phosphate acyltransferase (343 aa).

This sequence belongs to the PlsX family. In terms of assembly, homodimer. Probably interacts with PlsY.

It localises to the cytoplasm. It carries out the reaction a fatty acyl-[ACP] + phosphate = an acyl phosphate + holo-[ACP]. Its pathway is lipid metabolism; phospholipid metabolism. Catalyzes the reversible formation of acyl-phosphate (acyl-PO(4)) from acyl-[acyl-carrier-protein] (acyl-ACP). This enzyme utilizes acyl-ACP as fatty acyl donor, but not acyl-CoA. The polypeptide is Phosphate acyltransferase (Coxiella burnetii (strain Dugway 5J108-111)).